The sequence spans 211 residues: UPF0637 protein ABC2405 (211 aa).

The protein belongs to the UPF0637 family.

The sequence is that of UPF0637 protein ABC2405 from Shouchella clausii (strain KSM-K16) (Alkalihalobacillus clausii).